The following is a 47-amino-acid chain: Delta-ctenitoxin-Asp2e (47 aa).

Cystine bridges form between Cys-3/Cys-17, Cys-10/Cys-23, Cys-14/Cys-46, Cys-16/Cys-31, and Cys-25/Cys-29.

In terms of tissue distribution, expressed by the venom gland.

The protein resides in the secreted. Its function is as follows. Inhibits the inactivation of voltage-gated sodium channels (Nav). In Ancylometes sp. (South American fishing spider), this protein is Delta-ctenitoxin-Asp2e.